The chain runs to 101 residues: AKKRSRSRKRSASRKRSRSRKRSASKKSSKKHVRKALAAGMKNHLLAHPKGSNNFILAKKKAPRRRRRVAKKVKKAPPKARRRVRVAKSRRSRTARSRRRR.

Basic residues-rich tracts occupy residues 1–35 (AKKR…HVRK) and 58–101 (AKKK…RRRR). The tract at residues 1 to 101 (AKKRSRSRKR…SRTARSRRRR (101 aa)) is disordered. 4 consecutive repeat copies span residues 3–4 (KR), 5–6 (SR), 7–8 (SR), and 9–10 (KR). The interval 3 to 22 (KRSRSRKRSASRKRSRSRKR) is 10 X 2 AA approximate tandem repeats of [SK]-R. A 5; approximate repeat occupies 11 to 12 (SA). Tandem repeats lie at residues 13–14 (SR), 15–16 (KR), 17–18 (SR), 19–20 (SR), and 21–22 (KR). A globular region spans residues 32 to 65 (HVRKALAAGMKNHLLAHPKGSNNFILAKKKAPRR).

In terms of tissue distribution, sperm.

The protein localises to the nucleus. It is found in the chromosome. This is Histone H1-like protein EM6 from Ensis minor (Razor shell).